The chain runs to 453 residues: Tubulin beta-2 chain (453 aa).

8 residues coordinate GTP: Q11, E71, S140, G144, T145, G146, N206, and N228. E71 lines the Mg(2+) pocket.

Belongs to the tubulin family. Dimer of alpha and beta chains. A typical microtubule is a hollow water-filled tube with an outer diameter of 25 nm and an inner diameter of 15 nM. Alpha-beta heterodimers associate head-to-tail to form protofilaments running lengthwise along the microtubule wall with the beta-tubulin subunit facing the microtubule plus end conferring a structural polarity. Microtubules usually have 13 protofilaments but different protofilament numbers can be found in some organisms and specialized cells. Requires Mg(2+) as cofactor.

It localises to the cytoplasm. It is found in the cytoskeleton. Functionally, tubulin is the major constituent of microtubules, a cylinder consisting of laterally associated linear protofilaments composed of alpha- and beta-tubulin heterodimers. Microtubules grow by the addition of GTP-tubulin dimers to the microtubule end, where a stabilizing cap forms. Below the cap, tubulin dimers are in GDP-bound state, owing to GTPase activity of alpha-tubulin. This Geotrichum candidum (Oospora lactis) protein is Tubulin beta-2 chain.